The primary structure comprises 1349 residues: Spike glycoprotein (1349 aa).

An N-terminal signal peptide occupies residues 1 to 13; it reads MFFILLITLPSVF. Residues 14-1293 are Extracellular-facing; that stretch reads AVIGDLKCNT…GTYEYYVKWP (1280 aa). A BetaCoV S1-NTD domain is found at 15–298; it reads VIGDLKCNTS…DFMSEIMCKT (284 aa). 7 disulfide bridges follow: Cys21–Cys165, Cys160–Cys193, Cys172–Cys252, Cys286–Cys296, Cys331–Cys356, Cys374–Cys427, and Cys386–Cys601. 3 N-linked (GlcNAc...) asparagine; by host glycosylation sites follow: Asn22, Asn59, and Asn133. N-linked (GlcNAc...) asparagine; by host glycosylation occurs at Asn198. The 275-residue stretch at 329–603 folds into the BetaCoV S1-CTD domain; the sequence is PNCDIEAWLN…DVNSGTTCST (275 aa). Asn437, Asn456, Asn512, Asn611, Asn635, Asn662, Asn682, Asn700, Asn725, Asn774, and Asn881 each carry an N-linked (GlcNAc...) asparagine; by host glycan. Fusion peptide regions lie at residues 900–921 and 919–939; these read SAIE…VQAY and QAYN…VQSY. Residue Asn923 is glycosylated (N-linked (GlcNAc...) asparagine; by host). Cys924 and Cys935 are oxidised to a cystine. The segment at 1000-1050 is heptad repeat 1; it reads QKLIASAFNNALDSIQEGFDATNSALVKIQAVVNANAEALNNLLQQLSNRF. The stretch at 1029-1073 forms a coiled coil; the sequence is QAVVNANAEALNNLLQQLSNRFGAISASLQEILSRLDALEAKAQI. Residues Asn1180, Asn1210, Asn1220, Asn1239, Asn1253, and Asn1274 are each glycosylated (N-linked (GlcNAc...) asparagine; by host). A heptad repeat 2 region spans residues 1244 to 1282; the sequence is APDLSFDYINVTFLDLQDEMNRLQEAIKVLNHSYINLKD. The stretch at 1255-1283 forms a coiled coil; the sequence is TFLDLQDEMNRLQEAIKVLNHSYINLKDI. The chain crosses the membrane as a helical span at residues 1294 to 1314; sequence WYVWLLICLAGVVMLVLLFFI. At 1315 to 1349 the chain is on the cytoplasmic side; it reads CCCTGCGTSCFKKCGGCFDDYTGHQEFVIKTSHDD. The KxHxx motif lies at 1345-1349; sequence TSHDD.

It belongs to the betacoronaviruses spike protein family. Homotrimer; each monomer consists of a S1 and a S2 subunit. The resulting peplomers protrude from the virus surface as spikes. In terms of processing, specific enzymatic cleavages in vivo yield mature proteins. The precursor is processed into S1 and S2 by host cell furin or another cellular protease to yield the mature S1 and S2 proteins. Additionally, a second cleavage leads to the release of a fusion peptide after viral attachment to host cell receptor. Post-translationally, the cytoplasmic Cys-rich domain is palmitoylated. Spike glycoprotein is digested within host endosomes.

Its subcellular location is the virion membrane. The protein resides in the host endoplasmic reticulum-Golgi intermediate compartment membrane. It is found in the host cell membrane. Its function is as follows. Attaches the virion to the cell membrane by interacting with host receptor, initiating the infection. In terms of biological role, mediates fusion of the virion and cellular membranes by acting as a class I viral fusion protein. Under the current model, the protein has at least three conformational states: pre-fusion native state, pre-hairpin intermediate state, and post-fusion hairpin state. During viral and target cell membrane fusion, the coiled coil regions (heptad repeats) assume a trimer-of-hairpins structure, positioning the fusion peptide in close proximity to the C-terminal region of the ectodomain. The formation of this structure appears to drive apposition and subsequent fusion of viral and target cell membranes. Acts as a viral fusion peptide which is unmasked following S2 cleavage occurring upon virus endocytosis. This Porcine hemagglutinating encephalomyelitis virus (strain IAF-404) (HEV) protein is Spike glycoprotein.